A 219-amino-acid polypeptide reads, in one-letter code: MKFFVDSADVAAIAELNALGMVDGVTTNPSLILKSGRNILEVTKEICNLVSGPVSAEVVAAKAEDMIEEGRHLAEIAPNIAVKVPLTWDGLRACKVLSDEGRMVNVTLCFSVNQALLAAKAGATFISPFIGRLDDINLDGMELIADIRQVYDNYDFKTEVLAASVRTPNHVADCARIGADVITAPPAVIKALANHVLTDKGLDMFNADWAKTGQSILLK.

Lys83 serves as the catalytic Schiff-base intermediate with substrate.

Belongs to the transaldolase family. Type 3B subfamily.

The protein localises to the cytoplasm. It catalyses the reaction D-sedoheptulose 7-phosphate + D-glyceraldehyde 3-phosphate = D-erythrose 4-phosphate + beta-D-fructose 6-phosphate. Its pathway is carbohydrate degradation; pentose phosphate pathway; D-glyceraldehyde 3-phosphate and beta-D-fructose 6-phosphate from D-ribose 5-phosphate and D-xylulose 5-phosphate (non-oxidative stage): step 2/3. In terms of biological role, transaldolase is important for the balance of metabolites in the pentose-phosphate pathway. The polypeptide is Probable transaldolase (Cereibacter sphaeroides (strain ATCC 17029 / ATH 2.4.9) (Rhodobacter sphaeroides)).